The sequence spans 1201 residues: DNA-directed RNA polymerase subunit beta' (1201 aa).

Positions 60, 62, 75, and 78 each coordinate Zn(2+). Positions 449, 451, and 453 each coordinate Mg(2+). The Zn(2+) site is built by Cys-818, Cys-892, Cys-899, and Cys-902.

The protein belongs to the RNA polymerase beta' chain family. In terms of assembly, the RNAP catalytic core consists of 2 alpha, 1 beta, 1 beta' and 1 omega subunit. When a sigma factor is associated with the core the holoenzyme is formed, which can initiate transcription. Mg(2+) is required as a cofactor. Zn(2+) serves as cofactor.

The catalysed reaction is RNA(n) + a ribonucleoside 5'-triphosphate = RNA(n+1) + diphosphate. DNA-dependent RNA polymerase catalyzes the transcription of DNA into RNA using the four ribonucleoside triphosphates as substrates. The protein is DNA-directed RNA polymerase subunit beta' of Listeria monocytogenes serovar 1/2a (strain ATCC BAA-679 / EGD-e).